We begin with the raw amino-acid sequence, 321 residues long: Fe-S cluster assembly protein DRE2 (321 aa).

Positions 1–140 (MNNTAHSMSE…RRPASSSVAE (140 aa)) are N-terminal SAM-like domain. Residues 128-138 (IESRRPASSSV) are compositionally biased toward polar residues. The interval 128–166 (IESRRPASSSVAEKDSTASSGMGAVKLRRKPNENGGHQQ) is disordered. Positions 140 to 177 (EKDSTASSGMGAVKLRRKPNENGGHQQKKALLWATQPE) are linker. Residues Cys-202, Cys-217, Cys-220, and Cys-222 each contribute to the [2Fe-2S] cluster site. Residues 202 to 222 (CTVDFSAPRTRRKRACKGCTC) are fe-S binding site A. The interval 239–263 (QLDPSEVGGTGGKRTEVTTTVKGPN) is disordered. [4Fe-4S] cluster contacts are provided by Cys-283, Cys-286, Cys-294, and Cys-297. 2 short sequence motifs (cx2C motif) span residues 283–286 (CGSC) and 294–297 (CSSC). The segment at 283–297 (CGSCFLGDAFRCSSC) is fe-S binding site B.

Belongs to the anamorsin family. In terms of assembly, monomer. Interacts with TAH18. Interacts with MIA40. [2Fe-2S] cluster serves as cofactor. It depends on [4Fe-4S] cluster as a cofactor.

The protein resides in the cytoplasm. The protein localises to the mitochondrion intermembrane space. In terms of biological role, component of the cytosolic iron-sulfur (Fe-S) protein assembly (CIA) machinery required for the maturation of extramitochondrial Fe-S proteins. Part of an electron transfer chain functioning in an early step of cytosolic Fe-S biogenesis, facilitating the de novo assembly of a [4Fe-4S] cluster on the scaffold complex CFD1-NBP35. Electrons are transferred to DRE2 from NADPH via the FAD- and FMN-containing protein TAH18. TAH18-DRE2 are also required for the assembly of the diferric tyrosyl radical cofactor of ribonucleotide reductase (RNR), probably by providing electrons for reduction during radical cofactor maturation in the catalytic small subunit RNR2. This Malassezia globosa (strain ATCC MYA-4612 / CBS 7966) (Dandruff-associated fungus) protein is Fe-S cluster assembly protein DRE2.